Reading from the N-terminus, the 952-residue chain is MPDQTPAPSVLRFVDRHIGPDDQAVETLLNTIGVPSLDELAAKALPDVILDRLSTDGVAPGLEHLPAAATEHEALAELRALAQSNTVAVSMIGQGYYDTLTPPVLRRNIIENPAWYTAYTPYQPEISQGRLEALLNFQTMVTDLTGLEVANASMLDEGTAAAEAMTLMHRAVRGPATRLAVDADVYPQTAAILATRAEPLGIEIVTADLRQGLPDGDFFGVIVQLPGASGVVHDWSALVEQAHERGALVAVGADLLAATMITPPGEIGADVAFGTTQRFGVPMGFGGPHAGYLAVHSKHARQLPGRLVGVSVDADGSRAYRLALQTREQHIRRDKATSNICTAQVLLAVLAAMYASYHGPDGLRGIAQRVHGHARALAAGLADAGVEVVHDSFFDTVLAHVPGRADEVRAAAKERGINVWAVDADHVSVACDEATTAEHVADVLAAFGAAPSGADFAGPAVATRTSEFLTHPAFSDYRTETSMMRYLRSLADKDIALDRSMIPLGSCTMKLNAAAEMEAITWAEFGRQHPFAPASDTPGLRRLIADLQSWLTGITGYDEISLQPNAGSQGEYAGLLAIQAYHHARGDSGRTVCLIPSSAHGTNAASAAMVGMKVVVVACRANGDVDLDDLRAKVTEHADRLSALMITYPSTHGVYEHDIADICAAVHDAGGQVYVDGANLNALVGLARPGRFGGDVSHLNLHKTFCIPHGGGGPGVGPVAVRAHLAPYLPGHPLAAELSDDHTVSAAPYGSASILPITWAYIRMMGAAGLRSATLVAIASANYIARRLDEYYPVLYTGENGMVAHECILDLRGITKATGVTVDDVAKRLADYGFHAPTMSFPVAGTLMVEPTESESLSEIDAFCDAMIAIRAEIDRVGSGEWPVDDNPLRGAPHTAESLLVEEWTHPYTREQAAYPLGKGFRPKVWPPVRRIDGAYGDRNLVCSCPPVEAFA.

K703 carries the N6-(pyridoxal phosphate)lysine modification.

The protein belongs to the GcvP family. The glycine cleavage system is composed of four proteins: P, T, L and H. The cofactor is pyridoxal 5'-phosphate.

It catalyses the reaction N(6)-[(R)-lipoyl]-L-lysyl-[glycine-cleavage complex H protein] + glycine + H(+) = N(6)-[(R)-S(8)-aminomethyldihydrolipoyl]-L-lysyl-[glycine-cleavage complex H protein] + CO2. Functionally, the glycine cleavage system catalyzes the degradation of glycine. The P protein binds the alpha-amino group of glycine through its pyridoxal phosphate cofactor; CO(2) is released and the remaining methylamine moiety is then transferred to the lipoamide cofactor of the H protein. The polypeptide is Glycine dehydrogenase (decarboxylating) (Mycolicibacterium gilvum (strain PYR-GCK) (Mycobacterium gilvum (strain PYR-GCK))).